A 396-amino-acid polypeptide reads, in one-letter code: NADH-quinone oxidoreductase subunit D (396 aa).

Belongs to the complex I 49 kDa subunit family. In terms of assembly, NDH-1 is composed of 14 different subunits. Subunits NuoB, C, D, E, F, and G constitute the peripheral sector of the complex.

The protein resides in the cell inner membrane. It catalyses the reaction a quinone + NADH + 5 H(+)(in) = a quinol + NAD(+) + 4 H(+)(out). Its function is as follows. NDH-1 shuttles electrons from NADH, via FMN and iron-sulfur (Fe-S) centers, to quinones in the respiratory chain. The immediate electron acceptor for the enzyme in this species is believed to be ubiquinone. Couples the redox reaction to proton translocation (for every two electrons transferred, four hydrogen ions are translocated across the cytoplasmic membrane), and thus conserves the redox energy in a proton gradient. The polypeptide is NADH-quinone oxidoreductase subunit D (Brucella canis (strain ATCC 23365 / NCTC 10854 / RM-666)).